The primary structure comprises 217 residues: Octanoyltransferase (217 aa).

The BPL/LPL catalytic domain maps to 30 to 209; sequence GNRPPTLLLL…AFAEVFGLRP (180 aa). Substrate-binding positions include 75-82, 139-141, and 152-154; these read RGGDVTYH, AIG, and GFA. The active-site Acyl-thioester intermediate is the cysteine 170.

This sequence belongs to the LipB family.

It is found in the cytoplasm. The catalysed reaction is octanoyl-[ACP] + L-lysyl-[protein] = N(6)-octanoyl-L-lysyl-[protein] + holo-[ACP] + H(+). Its pathway is protein modification; protein lipoylation via endogenous pathway; protein N(6)-(lipoyl)lysine from octanoyl-[acyl-carrier-protein]: step 1/2. Catalyzes the transfer of endogenously produced octanoic acid from octanoyl-acyl-carrier-protein onto the lipoyl domains of lipoate-dependent enzymes. Lipoyl-ACP can also act as a substrate although octanoyl-ACP is likely to be the physiological substrate. The chain is Octanoyltransferase from Thermus thermophilus (strain ATCC 27634 / DSM 579 / HB8).